We begin with the raw amino-acid sequence, 266 residues long: Apolipoprotein A-I (266 aa).

The N-terminal stretch at 1-18 is a signal peptide; the sequence is MKAVVLTLAVLFLTGSQA. Tandem repeats lie at residues 67-88 and 89-110. The segment at 67–266 is 10 X approximate tandem repeats; that stretch reads LKLLDNWDSL…DEATKKLNSQ (200 aa). Met109 is subject to Methionine sulfoxide. Residues 111–121 form a 3; half-length repeat; that stretch reads KDLEEVKKKVQ. 5 tandem repeats follow at residues 122 to 143, 144 to 165, 166 to 187, 188 to 209, and 210 to 231. A 9; half-length repeat occupies 232–242; sequence PALEDLRQGLL. Repeat unit 10 spans residues 243-266; that stretch reads PVLENFRDSLLAAVDEATKKLNSQ.

It belongs to the apolipoprotein A1/A4/E family. As to quaternary structure, homodimer. Interacts with APOA1BP and CLU. Component of a sperm activating protein complex (SPAP), consisting of APOA1, an immunoglobulin heavy chain, an immunoglobulin light chain and albumin. Interacts with NDRG1. Interacts with SCGB3A2. Interacts with NAXE and YJEFN3. Glycosylated. In terms of processing, palmitoylated. Post-translationally, phosphorylation sites are present in the extracellular medium.

Its subcellular location is the secreted. In terms of biological role, participates in the reverse transport of cholesterol from tissues to the liver for excretion by promoting cholesterol efflux from tissues and by acting as a cofactor for the lecithin cholesterol acyltransferase (LCAT). As part of the SPAP complex, activates spermatozoa motility. This Neomonachus schauinslandi (Hawaiian monk seal) protein is Apolipoprotein A-I (APOA1).